The chain runs to 179 residues: uncharacterized protein (179 aa).

The Rhodanese domain maps to 21-109; that stretch reads QQDAVILVDV…WKQAGLPTVK (89 aa). 2 helical membrane-spanning segments follow: residues 115–135 and 138–158; these read ISIMRQVQIIAGSLVLTGVLL and FVAPGFYFLSGFVGAGLLFAG.

It localises to the cell membrane. This is an uncharacterized protein from Synechocystis sp. (strain ATCC 27184 / PCC 6803 / Kazusa).